Here is a 579-residue protein sequence, read N- to C-terminus: V-type ATP synthase alpha chain (579 aa).

238-245 (GPFGAGKT) contacts ATP.

It belongs to the ATPase alpha/beta chains family.

It catalyses the reaction ATP + H2O + 4 H(+)(in) = ADP + phosphate + 5 H(+)(out). Functionally, produces ATP from ADP in the presence of a proton gradient across the membrane. The V-type alpha chain is a catalytic subunit. This Borrelia hermsii (strain HS1 / DAH) protein is V-type ATP synthase alpha chain.